The primary structure comprises 512 residues: MKKIQFFDTTLRDGEQTPGVNFDVKEKIQIALQLEKLGIDVIEAGFPISSPGDFECVKAIAKAIKHCSVTGLARCVEADIDRAEEALKDAVSPQIHIFLATSDVHMEYKLKMSRAEVLASIKHHISYARQKFDVVQFSPEDATRSDRAFLIEAVQTAIDAGATVINIPDTVGYTNPTEFGQLFQDLRREIKQFDDIIFASHCHDDLGMATANALAAIENGARRVEGTINGIGERAGNTALEEVAVALHIRKDFYQAETNIVLNQFKNSSDLISRLSGMPVPRNKAVIGGNAYAHESGIHQDGVLKNPDTYEIITPALVGVDKNSLPLGKLSGKHAFNTRMEEMGYTLSEQEQKDAFKRFKQLADAKKDVTEEDLHALILGQSSESHDAFELKHLQVQYVTGGVQGAIVRIEERDGALIEDAATGSGSIEAIYNTINRLMKQDIELTDYRIQAITAGQDAQAEVHVVIKDDNGTEFHGIGIDFDVLTASAKAYLQASGKSKSTSKQADFEEVK.

Positions 4-266 (IQFFDTTLRD…ETNIVLNQFK (263 aa)) constitute a Pyruvate carboxyltransferase domain. The Mn(2+) site is built by Asp13, His201, His203, and Asn237. Residues 390–512 (ELKHLQVQYV…SKQADFEEVK (123 aa)) are regulatory domain.

The protein belongs to the alpha-IPM synthase/homocitrate synthase family. LeuA type 1 subfamily. Homodimer. The cofactor is Mn(2+).

It localises to the cytoplasm. The catalysed reaction is 3-methyl-2-oxobutanoate + acetyl-CoA + H2O = (2S)-2-isopropylmalate + CoA + H(+). It functions in the pathway amino-acid biosynthesis; L-leucine biosynthesis; L-leucine from 3-methyl-2-oxobutanoate: step 1/4. Catalyzes the condensation of the acetyl group of acetyl-CoA with 3-methyl-2-oxobutanoate (2-ketoisovalerate) to form 3-carboxy-3-hydroxy-4-methylpentanoate (2-isopropylmalate). The chain is 2-isopropylmalate synthase from Listeria innocua serovar 6a (strain ATCC BAA-680 / CLIP 11262).